We begin with the raw amino-acid sequence, 104 residues long: Large ribosomal subunit protein uL24 (104 aa).

The protein belongs to the universal ribosomal protein uL24 family. In terms of assembly, part of the 50S ribosomal subunit.

Functionally, one of two assembly initiator proteins, it binds directly to the 5'-end of the 23S rRNA, where it nucleates assembly of the 50S subunit. Its function is as follows. One of the proteins that surrounds the polypeptide exit tunnel on the outside of the subunit. The polypeptide is Large ribosomal subunit protein uL24 (Bradyrhizobium diazoefficiens (strain JCM 10833 / BCRC 13528 / IAM 13628 / NBRC 14792 / USDA 110)).